The sequence spans 492 residues: MPRFVDRVVIHARAGSGGNGCASVHREKFKPLGGPDGGNGGRGGSIVFVVDPQVHTLLDFHFHPHISAPSGKQGMGNNRDGAAGADLEVKVPDGTVVLDENGRLLADLVGAGTRFEAAAGGRGGLGNAALASRARKAPGFALLGEPGETRELTLELKTVADVGLIGFPSAGKSSLVSAISAAKPKIADYPFTTLVPNLGVVSAGEHTFTVADVPGLIPGASAGRGLGLDFLRHIERCAVLVHVIDCATADPGRDPISDIDALEAELAAYTPTLQGDVTLGDLTERPRAVVLNKIDVPEARELAEFVRDEIAERGWPVFLVSTVAREGLQPLIFGLWQMISEYQSAQPEIVPRRSVIRPVPVDDSGFRVEPDPRQPGAFVVSGARPERWVRQTNFDNDEAVGYLADRLARLGVEEELLRLGARPGCAVTIGDMTFDWEPQTPAGQQVVLSGRGTDARLERTERVGAAERKAARRQRRTGDDAERGTTERGENT.

The Obg domain occupies 2 to 159 (PRFVDRVVIH…RELTLELKTV (158 aa)). The 181-residue stretch at 160-340 (ADVGLIGFPS…LIFGLWQMIS (181 aa)) folds into the OBG-type G domain. GTP contacts are provided by residues 166-173 (GFPSAGKS), 191-195 (FTTLV), 212-215 (DVPG), 292-295 (NKID), and 321-323 (STV). Residues serine 173 and threonine 193 each coordinate Mg(2+). In terms of domain architecture, OCT spans 358-438 (PVPVDDSGFR…IGDMTFDWEP (81 aa)). The disordered stretch occupies residues 449 to 492 (SGRGTDARLERTERVGAAERKAARRQRRTGDDAERGTTERGENT). Basic and acidic residues-rich tracts occupy residues 453–469 (TDAR…AERK) and 476–492 (RTGD…GENT).

Belongs to the TRAFAC class OBG-HflX-like GTPase superfamily. OBG GTPase family. In terms of assembly, monomer. Mg(2+) is required as a cofactor.

It localises to the cytoplasm. In terms of biological role, an essential GTPase which binds GTP, GDP and possibly (p)ppGpp with moderate affinity, with high nucleotide exchange rates and a fairly low GTP hydrolysis rate. Plays a role in control of the cell cycle, stress response, ribosome biogenesis and in those bacteria that undergo differentiation, in morphogenesis control. This is GTPase Obg from Mycobacterium avium (strain 104).